Reading from the N-terminus, the 72-residue chain is Large ribosomal subunit protein bL31 (72 aa).

4 residues coordinate Zn(2+): C16, C18, C38, and C41.

It belongs to the bacterial ribosomal protein bL31 family. Type A subfamily. As to quaternary structure, part of the 50S ribosomal subunit. Zn(2+) is required as a cofactor.

Functionally, binds the 23S rRNA. In Azoarcus sp. (strain BH72), this protein is Large ribosomal subunit protein bL31.